The chain runs to 446 residues: C-type lectin domain family 18 member C (446 aa).

A signal peptide spans M1–A26. An SCP domain is found at L52–Y182. Residue N144 is glycosylated (N-linked (GlcNAc...) asparagine). One can recognise an EGF-like domain in the interval P228–Q261. 4 disulfides stabilise this stretch: C236/C249, C251/C260, C327/C432, and C408/C424. One can recognise a C-type lectin domain in the interval I306–Q433.

As to expression, detected in peripheral blood cells.

The protein localises to the secreted. Its subcellular location is the endoplasmic reticulum. The protein resides in the golgi apparatus. It localises to the endosome. Binds polysaccharidesin a Ca(2+)-independent manner with a preferentially binding to fucoidan, beta-glucans and galactans. The sequence is that of C-type lectin domain family 18 member C (CLEC18C) from Homo sapiens (Human).